Here is a 93-residue protein sequence, read N- to C-terminus: UPF0358 protein RBAM_014700 (93 aa).

It belongs to the UPF0358 family.

The sequence is that of UPF0358 protein RBAM_014700 from Bacillus velezensis (strain DSM 23117 / BGSC 10A6 / LMG 26770 / FZB42) (Bacillus amyloliquefaciens subsp. plantarum).